A 213-amino-acid polypeptide reads, in one-letter code: Ribosomal RNA small subunit methyltransferase G (213 aa).

S-adenosyl-L-methionine contacts are provided by residues Gly83, Leu88, 132–133 (IE), and Arg146.

This sequence belongs to the methyltransferase superfamily. RNA methyltransferase RsmG family.

It is found in the cytoplasm. It catalyses the reaction guanosine(527) in 16S rRNA + S-adenosyl-L-methionine = N(7)-methylguanosine(527) in 16S rRNA + S-adenosyl-L-homocysteine. Functionally, specifically methylates the N7 position of guanine in position 527 of 16S rRNA. The chain is Ribosomal RNA small subunit methyltransferase G from Granulibacter bethesdensis (strain ATCC BAA-1260 / CGDNIH1).